The sequence spans 56 residues: Ovomucoid (56 aa).

The region spanning 6-56 is the Kazal-like domain; the sequence is VDCSEYPKPDCTTEERPLCGSDNKTYGNKCNFCNAVVESNGTLTLSHFGKC. Intrachain disulfides connect C8–C38, C16–C35, and C24–C56. Residue N45 is glycosylated (N-linked (GlcNAc...) asparagine).

The protein resides in the secreted. The chain is Ovomucoid from Francolinus pondicerianus (Grey francolin).